The primary structure comprises 476 residues: 3-isopropylmalate dehydratase large subunit (476 aa).

[4Fe-4S] cluster contacts are provided by cysteine 353, cysteine 413, and cysteine 416.

This sequence belongs to the aconitase/IPM isomerase family. LeuC type 1 subfamily. In terms of assembly, heterodimer of LeuC and LeuD. [4Fe-4S] cluster serves as cofactor.

It carries out the reaction (2R,3S)-3-isopropylmalate = (2S)-2-isopropylmalate. It functions in the pathway amino-acid biosynthesis; L-leucine biosynthesis; L-leucine from 3-methyl-2-oxobutanoate: step 2/4. Catalyzes the isomerization between 2-isopropylmalate and 3-isopropylmalate, via the formation of 2-isopropylmaleate. In Yersinia enterocolitica serotype O:8 / biotype 1B (strain NCTC 13174 / 8081), this protein is 3-isopropylmalate dehydratase large subunit.